Consider the following 262-residue polypeptide: GTP cyclohydrolase 1 type 2 homolog (262 aa).

Positions 68, 69, 108, 226, and 229 each coordinate a divalent metal cation.

Belongs to the GTP cyclohydrolase I type 2/NIF3 family. Homohexamer.

This chain is GTP cyclohydrolase 1 type 2 homolog, found in Ureaplasma parvum serovar 3 (strain ATCC 700970).